Consider the following 88-residue polypeptide: Large ribosomal subunit protein bL27 (88 aa).

This sequence belongs to the bacterial ribosomal protein bL27 family.

The chain is Large ribosomal subunit protein bL27 from Carboxydothermus hydrogenoformans (strain ATCC BAA-161 / DSM 6008 / Z-2901).